A 183-amino-acid chain; its full sequence is Orotate phosphoribosyltransferase (183 aa).

5-phospho-alpha-D-ribose 1-diphosphate is bound by residues Arg-90, Lys-91, Lys-94, and 115-123 (DDVATTGGS). Thr-119 and Arg-147 together coordinate orotate.

Belongs to the purine/pyrimidine phosphoribosyltransferase family. PyrE subfamily. As to quaternary structure, homodimer. Mg(2+) serves as cofactor.

It carries out the reaction orotidine 5'-phosphate + diphosphate = orotate + 5-phospho-alpha-D-ribose 1-diphosphate. It functions in the pathway pyrimidine metabolism; UMP biosynthesis via de novo pathway; UMP from orotate: step 1/2. In terms of biological role, catalyzes the transfer of a ribosyl phosphate group from 5-phosphoribose 1-diphosphate to orotate, leading to the formation of orotidine monophosphate (OMP). The chain is Orotate phosphoribosyltransferase from Methanopyrus kandleri (strain AV19 / DSM 6324 / JCM 9639 / NBRC 100938).